The sequence spans 77 residues: Defensin-like protein 91 (77 aa).

Residues 1 to 27 (METKKISYFLLPSLMIVALIFQPMCSA) form the signal peptide. 4 disulfides stabilise this stretch: C38/C75, C43/C64, C49/C73, and C53/C74.

This sequence belongs to the DEFL family.

The protein localises to the secreted. This chain is Defensin-like protein 91 (LCR47), found in Arabidopsis thaliana (Mouse-ear cress).